The following is a 234-amino-acid chain: Probable RNA/DNA demethylase ALKBH6 (234 aa).

The Fe2OG dioxygenase domain occupies 96 to 222; that stretch reads TANHVLVNEY…RVSLTIRHVP (127 aa). Positions 103 and 105 each coordinate 2-oxoglutarate. Fe cation is bound by residues His-114, Asp-116, and His-180. Positions 213 and 215 each coordinate 2-oxoglutarate.

It belongs to the alkB family. The cofactor is Fe(2+).

The protein localises to the cytoplasm. Its subcellular location is the nucleus. In terms of biological role, probable Fe(2+)/2-oxoglutarate-dependent dioxygenase involved in oxidative demethylation of nucleic acids. Binds nucleic acids with a preference for ssDNA or ssRNA to other types of DNAs. May play a role in nucleic acid damage repair. This Danio rerio (Zebrafish) protein is Probable RNA/DNA demethylase ALKBH6 (alkbh6).